The chain runs to 400 residues: Acetate kinase (400 aa).

Residue Asn-10 coordinates Mg(2+). Lys-17 is a binding site for ATP. Arg-89 provides a ligand contact to substrate. Asp-148 acts as the Proton donor/acceptor in catalysis. Residues 208-212 (HLGNG), 283-285 (DCR), and 331-335 (GIGEN) contribute to the ATP site. Residue Glu-385 participates in Mg(2+) binding.

The protein belongs to the acetokinase family. In terms of assembly, homodimer. The cofactor is Mg(2+). Requires Mn(2+) as cofactor.

It localises to the cytoplasm. The catalysed reaction is acetate + ATP = acetyl phosphate + ADP. Its pathway is metabolic intermediate biosynthesis; acetyl-CoA biosynthesis; acetyl-CoA from acetate: step 1/2. Functionally, catalyzes the formation of acetyl phosphate from acetate and ATP. Can also catalyze the reverse reaction. This chain is Acetate kinase, found in Haemophilus ducreyi (strain 35000HP / ATCC 700724).